We begin with the raw amino-acid sequence, 150 residues long: Multiprotein-bridging factor 1 (150 aa).

The disordered stretch occupies residues 36–71 (SSESKGAGQSKGPADHQRIAKLDRDDAPKPPEKVSA). Residues 48–70 (PADHQRIAKLDRDDAPKPPEKVS) are compositionally biased toward basic and acidic residues. One can recognise an HTH cro/C1-type domain in the interval 84–137 (IKNAEGKSMTQKELATSVNAKPQDIADLESGRAVPDQALLGKLERKLNVKLRGA). Positions 94–113 (QKELATSVNAKPQDIADLES) form a DNA-binding region, H-T-H motif.

It belongs to the MBF1 family.

In terms of biological role, transcriptional coactivator that stimulates GCN4-dependent transcriptional activity by bridging the DNA-binding region of GCN4 and TBP (SPT15), thereby recruiting TBP to GCN4-bound promoters. Involved in induction of the ribosome quality control (RQC) pathway; a pathway that degrades nascent peptide chains during problematic translation. Required to prevent stalled ribosomes from frameshifting. In Cryptococcus neoformans var. neoformans serotype D (strain B-3501A) (Filobasidiella neoformans), this protein is Multiprotein-bridging factor 1 (MBF1).